A 260-amino-acid chain; its full sequence is Nuclear receptor subfamily 0 group B member 2 (260 aa).

The 245-residue stretch at 16 to 260 (SHPTILYTLL…ELLEDMLLLR (245 aa)) folds into the NR LBD domain. Position 57 is a symmetric dimethylarginine; by PRMT5 (R57).

Belongs to the nuclear hormone receptor family. NR0 subfamily. Heterodimer; efficient DNA binding requires dimerization with another bHLH protein. Interacts (via N-terminus) with NEUROD1 (via N-terminus and C-terminus). Interacts with ID2. Interacts with NR1I3 and EID1. Interacts with RARA, RXRA, THRB, NR5A1, NR5A2, PPARA and PPARG. Interacts with RORG, NFIL3, NR1D1 and BHLHE41. Interacts with HNF4A; the resulting heterodimer is transcriptionally inactive. Interacts with DDX3X; this interaction disrupts the interaction between HNF4 and NR0B2/SHP that forms inactive heterodimers and enhances the formation of active HNF4 homodimers. Arginine methylation by PRMT5 enhances repression activity of metabolic genes in liver in response to bile acid signaling, by increasing interaction with cofactors. As to expression, detected in kidney, testis, heart and liver.

The protein resides in the cytoplasm. It is found in the nucleus. Transcriptional regulator that acts as a negative regulator of receptor-dependent signaling pathways. Specifically inhibits transactivation of the nuclear receptor with which it interacts. Inhibits transcriptional activity of NEUROD1 on E-box-containing promoter by interfering with the coactivation function of the p300/CBP-mediated transcription complex for NEUROD1. Essential component of the liver circadian clock which via its interaction with NR1D1 and RORG regulates NPAS2-mediated hepatic lipid metabolism. Regulates the circadian expression of cytochrome P450 (CYP) enzymes. Represses: NR5A2 and HNF4A to down-regulate CYP2C38, NFLI3 to up-regulate CYP2A5, BHLHE41/HNF1A axis to up-regulate CYP1A2, CYP2E1 and CYP3A11, and NR1D1 to up-regulate CYP2B10, CYP4A10 and CYP4A14. The sequence is that of Nuclear receptor subfamily 0 group B member 2 (Nr0b2) from Rattus norvegicus (Rat).